A 201-amino-acid polypeptide reads, in one-letter code: MKINWQKVDNLLPVIIQNVATCEVLMLGYMNQEALEKTLAEKRVTFFSRTKNRLWTKGETSGHFLNVVDMSLDCDNDTLLILVNPIGETCHTGAESCFYQFEKTTQPDWIFLSKLERLIASRKGADPESSYTAQLYAKGTKRIAQKVGEEGVETALAATVKDKAETICEAADLVYHLTVLLQDADLSWSDVIHKLKERHTK.

The segment at 1-111 (MKINWQKVDN…EKTTQPDWIF (111 aa)) is phosphoribosyl-AMP cyclohydrolase. Positions 112–201 (LSKLERLIAS…IHKLKERHTK (90 aa)) are phosphoribosyl-ATP pyrophosphohydrolase.

In the N-terminal section; belongs to the PRA-CH family. The protein in the C-terminal section; belongs to the PRA-PH family.

The protein resides in the cytoplasm. It carries out the reaction 1-(5-phospho-beta-D-ribosyl)-ATP + H2O = 1-(5-phospho-beta-D-ribosyl)-5'-AMP + diphosphate + H(+). The catalysed reaction is 1-(5-phospho-beta-D-ribosyl)-5'-AMP + H2O = 1-(5-phospho-beta-D-ribosyl)-5-[(5-phospho-beta-D-ribosylamino)methylideneamino]imidazole-4-carboxamide. Its pathway is amino-acid biosynthesis; L-histidine biosynthesis; L-histidine from 5-phospho-alpha-D-ribose 1-diphosphate: step 2/9. The protein operates within amino-acid biosynthesis; L-histidine biosynthesis; L-histidine from 5-phospho-alpha-D-ribose 1-diphosphate: step 3/9. This Pasteurella multocida (strain Pm70) protein is Histidine biosynthesis bifunctional protein HisIE (hisI).